A 305-amino-acid chain; its full sequence is Glycine--tRNA ligase alpha subunit (305 aa).

It belongs to the class-II aminoacyl-tRNA synthetase family. As to quaternary structure, tetramer of two alpha and two beta subunits.

The protein localises to the cytoplasm. The enzyme catalyses tRNA(Gly) + glycine + ATP = glycyl-tRNA(Gly) + AMP + diphosphate. The chain is Glycine--tRNA ligase alpha subunit from Janthinobacterium sp. (strain Marseille) (Minibacterium massiliensis).